Reading from the N-terminus, the 163-residue chain is Cyanate hydratase (163 aa).

Active-site residues include R103, E106, and S129.

It belongs to the cyanase family.

It carries out the reaction cyanate + hydrogencarbonate + 3 H(+) = NH4(+) + 2 CO2. Its function is as follows. Catalyzes the reaction of cyanate with bicarbonate to produce ammonia and carbon dioxide. This Paracoccidioides lutzii (strain ATCC MYA-826 / Pb01) (Paracoccidioides brasiliensis) protein is Cyanate hydratase.